The chain runs to 209 residues: CASP-like protein 2A2 (209 aa).

At 1-37 (MSKTAGVGRLGGARAADAAQQQQLAAGDAAVARAARP) the chain is on the cytoplasmic side. A helical membrane pass occupies residues 38–58 (IETLLRAAPLVLCVAAMTLML). Topologically, residues 59–79 (RDQQSNEYGTVAYSDLGGFKY) are extracellular. The helical transmembrane segment at 80–100 (LVYANGLCAAYSLASAFYTAV) threads the bilayer. Over 101 to 109 (PRPATVSRS) the chain is Cytoplasmic. A helical transmembrane segment spans residues 110 to 130 (WVVFLLDQVFTYLILAAGAAA). Topologically, residues 131-161 (AELLYLAYNGDKEVTWSEACGVFGSFCRQAR) are extracellular. A helical membrane pass occupies residues 162-182 (ISVAITFGAVLCFILLSLLSS). At 183–209 (YRLFSAYEAPPPSALGSKGVEIAAYPR) the chain is on the cytoplasmic side.

This sequence belongs to the Casparian strip membrane proteins (CASP) family. Homodimer and heterodimers.

It localises to the cell membrane. This is CASP-like protein 2A2 from Zea mays (Maize).